The primary structure comprises 427 residues: Gamma-glutamyl phosphate reductase (427 aa).

The protein belongs to the gamma-glutamyl phosphate reductase family.

The protein localises to the cytoplasm. It carries out the reaction L-glutamate 5-semialdehyde + phosphate + NADP(+) = L-glutamyl 5-phosphate + NADPH + H(+). Its pathway is amino-acid biosynthesis; L-proline biosynthesis; L-glutamate 5-semialdehyde from L-glutamate: step 2/2. Functionally, catalyzes the NADPH-dependent reduction of L-glutamate 5-phosphate into L-glutamate 5-semialdehyde and phosphate. The product spontaneously undergoes cyclization to form 1-pyrroline-5-carboxylate. The protein is Gamma-glutamyl phosphate reductase of Rhizobium etli (strain ATCC 51251 / DSM 11541 / JCM 21823 / NBRC 15573 / CFN 42).